The following is a 2531-amino-acid chain: Neurogenic locus notch homolog protein 1 (2531 aa).

The signal sequence occupies residues 1-18; sequence MPRLLTPLLCLTLLPALA. The Extracellular segment spans residues 19–1725; sequence ARGLRCSQPS…VEPPLPSQLH (1707 aa). 4 consecutive EGF-like domains span residues 20-58, 59-99, 102-139, and 140-176; these read RGLR…QRCQ, DSNP…PLCL, LDNA…KSCQ, and QADP…PTCR. Cystine bridges form between cysteine 24–cysteine 37, cysteine 31–cysteine 46, cysteine 63–cysteine 74, cysteine 68–cysteine 87, cysteine 89–cysteine 98, cysteine 106–cysteine 117, cysteine 111–cysteine 127, cysteine 129–cysteine 138, cysteine 144–cysteine 155, cysteine 149–cysteine 164, cysteine 166–cysteine 175, cysteine 182–cysteine 195, cysteine 189–cysteine 204, cysteine 206–cysteine 215, cysteine 222–cysteine 233, cysteine 227–cysteine 243, cysteine 245–cysteine 254, cysteine 261–cysteine 272, cysteine 266–cysteine 281, cysteine 283–cysteine 292, cysteine 299–cysteine 312, cysteine 306–cysteine 321, cysteine 323–cysteine 332, cysteine 339–cysteine 350, cysteine 344–cysteine 359, cysteine 361–cysteine 370, cysteine 376–cysteine 387, cysteine 381–cysteine 398, cysteine 400–cysteine 409, cysteine 416–cysteine 429, cysteine 423–cysteine 438, and cysteine 440–cysteine 449. Serine 65 carries an O-linked (Glc...) serine glycan. Threonine 73 is a glycosylation site (O-linked (Fuc...) threonine). A glycan (O-linked (Fuc...) threonine) is linked at threonine 116. Serine 146 is a glycosylation site (O-linked (Glc...) serine). An EGF-like 5; calcium-binding domain is found at 178-216; sequence DVNECSQNPGLCRHGGTCHNEIGSYRCACRATHTGPHCE. Threonine 194 carries O-linked (Fuc...) threonine glycosylation. The EGF-like 6 domain maps to 218–255; that stretch reads PYVPCSPSPCQNGGTCRPTGDTTHECACLPGFAGQNCE. A glycan (O-linked (Fuc...) threonine; alternate) is linked at threonine 232. An O-linked (GalNAc...) threonine; alternate glycan is attached at threonine 232. In terms of domain architecture, EGF-like 7; calcium-binding spans 257-293; sequence NVDDCPGNNCKNGGACVDGVNTYNCRCPPEWTGQYCT. The 39-residue stretch at 295–333 folds into the EGF-like 8; calcium-binding domain; it reads DVDECQLMPNACQNGGTCHNTHGGYNCVCVNGWTGEDCS. An O-linked (Fuc...) threonine glycan is attached at threonine 311. The EGF-like 9; calcium-binding domain maps to 335–371; the sequence is NIDDCASAACFQGATCHDRVASFYCECPHGRTGLLCH. Serine 341 is a glycosylation site (O-linked (Glc...) serine). Threonine 349 is a glycosylation site (O-linked (Fuc...) threonine). The region spanning 372-410 is the EGF-like 10; calcium-binding domain; the sequence is LNDACISNPCNEGSNCDTNPVNGKAICTCPSGYTGPACS. A glycan (O-linked (Glc...) serine) is linked at serine 378. In terms of domain architecture, EGF-like 11; calcium-binding spans 412–450; the sequence is DVDECALGANPCEHAGKCLNTLGSFECQCLQGYTGPRCE. Residues 420 to 421 form an interaction with DLL4 region; it reads AN. Ca(2+)-binding residues include threonine 432 and serine 435. An O-linked (Glc...) serine glycan is attached at serine 435. Residues 448 to 452 are interaction with DLL4; sequence RCEID. The Ca(2+) site is built by aspartate 452, valine 453, and glutamate 455. The EGF-like 12; calcium-binding domain occupies 452–488; the sequence is DVNECISNPCQNDATCLDQIGEFQCICMPGYEGVYCE. 3 cysteine pairs are disulfide-bonded: cysteine 456-cysteine 467, cysteine 461-cysteine 476, and cysteine 478-cysteine 487. O-linked (Glc...) serine glycosylation occurs at serine 458. Threonine 466 carries an O-linked (Fuc...) threonine glycan. Positions 469 and 470 each coordinate Ca(2+). Residues asparagine 490, threonine 491, and glutamate 493 each coordinate Ca(2+). Residues 490–526 form the EGF-like 13; calcium-binding domain; it reads NTDECASSPCLHNGHCMDKINEFQCQCPKGFNGHLCQ. 75 disulfide bridges follow: cysteine 494–cysteine 505, cysteine 499–cysteine 514, cysteine 516–cysteine 525, cysteine 532–cysteine 543, cysteine 537–cysteine 552, cysteine 554–cysteine 563, cysteine 570–cysteine 580, cysteine 575–cysteine 589, cysteine 591–cysteine 600, cysteine 607–cysteine 618, cysteine 612–cysteine 627, cysteine 629–cysteine 638, cysteine 645–cysteine 655, cysteine 650–cysteine 664, cysteine 666–cysteine 675, cysteine 682–cysteine 693, cysteine 687–cysteine 702, cysteine 704–cysteine 713, cysteine 720–cysteine 730, cysteine 725–cysteine 739, cysteine 741–cysteine 750, cysteine 757–cysteine 768, cysteine 762–cysteine 777, cysteine 779–cysteine 788, cysteine 795–cysteine 806, cysteine 800–cysteine 815, cysteine 817–cysteine 826, cysteine 833–cysteine 844, cysteine 838–cysteine 855, cysteine 857–cysteine 866, cysteine 873–cysteine 884, cysteine 878–cysteine 893, cysteine 895–cysteine 904, cysteine 911–cysteine 922, cysteine 916–cysteine 931, cysteine 933–cysteine 942, cysteine 949–cysteine 960, cysteine 954–cysteine 969, cysteine 971–cysteine 980, cysteine 987–cysteine 998, cysteine 992–cysteine 1007, cysteine 1009–cysteine 1018, cysteine 1025–cysteine 1036, cysteine 1030–cysteine 1045, cysteine 1047–cysteine 1056, cysteine 1063–cysteine 1074, cysteine 1068–cysteine 1083, cysteine 1085–cysteine 1094, cysteine 1101–cysteine 1122, cysteine 1116–cysteine 1131, cysteine 1133–cysteine 1142, cysteine 1149–cysteine 1160, cysteine 1154–cysteine 1169, cysteine 1171–cysteine 1180, cysteine 1187–cysteine 1198, cysteine 1192–cysteine 1207, cysteine 1209–cysteine 1218, cysteine 1225–cysteine 1244, cysteine 1238–cysteine 1253, cysteine 1255–cysteine 1264, cysteine 1271–cysteine 1284, cysteine 1276–cysteine 1293, cysteine 1295–cysteine 1304, cysteine 1311–cysteine 1322, cysteine 1316–cysteine 1334, cysteine 1336–cysteine 1345, cysteine 1352–cysteine 1363, cysteine 1357–cysteine 1372, cysteine 1374–cysteine 1383, cysteine 1391–cysteine 1403, cysteine 1397–cysteine 1414, cysteine 1416–cysteine 1425, cysteine 1449–cysteine 1472, cysteine 1454–cysteine 1467, and cysteine 1463–cysteine 1479. An O-linked (Glc...) serine glycan is attached at serine 496. Ca(2+) is bound by residues aspartate 507 and lysine 508. Residues 528-564 enclose the EGF-like 14; calcium-binding domain; the sequence is DVDECASTPCKNGAKCLDGPNTYTCVCTEGYTGTHCE. The O-linked (Glc...) serine glycan is linked to serine 534. The EGF-like 15; calcium-binding domain occupies 566–601; sequence DIDECDPDPCHYGSCKDGVATFTCLCQPGYTGHHCE. In terms of domain architecture, EGF-like 16; calcium-binding spans 603–639; the sequence is NINECHSQPCRHGGTCQDRDNSYLCLCLKGTTGPNCE. Residue serine 609 is glycosylated (O-linked (Glc...) serine). An O-linked (Fuc...) threonine glycan is attached at threonine 617. The EGF-like 17; calcium-binding domain occupies 641-676; sequence NLDDCASNPCDSGTCLDKIDGYECACEPGYTGSMCN. O-linked (Glc...) serine glycosylation is present at serine 647. Positions 678–714 constitute an EGF-like 18; calcium-binding domain; sequence NIDECAGSPCHNGGTCEDGIAGFTCRCPEGYHDPTCL. The O-linked (Fuc...) threonine glycan is linked to threonine 692. Residues 716-751 form the EGF-like 19; calcium-binding domain; that stretch reads EVNECNSNPCIHGACRDGLNGYKCDCAPGWSGTNCD. Serine 722 is a glycosylation site (O-linked (Glc...) serine). One can recognise an EGF-like 20; calcium-binding domain in the interval 753-789; it reads NNNECESNPCVNGGTCKDMTSGYVCTCREGFSGPNCQ. Serine 759 carries an O-linked (Glc...) serine glycan. The O-linked (Fuc...) threonine glycan is linked to threonine 767. O-linked (GlcNAc) serine glycosylation occurs at serine 784. The EGF-like 21; calcium-binding domain occupies 791-827; sequence NINECASNPCLNQGTCIDDVAGYKCNCPLPYTGATCE. Serine 797 is a glycosylation site (O-linked (Glc...) serine). O-linked (Fuc...) threonine glycosylation occurs at threonine 805. Residues 829–867 enclose the EGF-like 22 domain; it reads VLAPCATSPCKNSGVCKESEDYESFSCVCPTGWQGQTCE. The 37-residue stretch at 869–905 folds into the EGF-like 23; calcium-binding domain; sequence DINECVKSPCRHGASCQNTNGSYRCLCQAGYTGRNCE. Asparagine 888 carries an N-linked (GlcNAc...) asparagine glycan. O-linked (GlcNAc) threonine glycosylation is present at threonine 900. In terms of domain architecture, EGF-like 24 spans 907–943; it reads DIDDCRPNPCHNGGSCTDGINTAFCDCLPGFQGAFCE. The O-linked (Fuc) serine glycan is linked to serine 921. Positions 945–981 constitute an EGF-like 25; calcium-binding domain; that stretch reads DINECASNPCQNGANCTDCVDSYTCTCPVGFNGIHCE. Serine 951 is a glycosylation site (O-linked (Glc...) serine). Asparagine 959 is a glycosylation site (N-linked (GlcNAc...) asparagine). One can recognise an EGF-like 26 domain in the interval 983 to 1019; it reads NTPDCTESSCFNGGTCVDGINSFTCLCPPGFTGSYCQ. Threonine 997 is a glycosylation site (O-linked (Fuc...) threonine). Positions 1021–1057 constitute an EGF-like 27; calcium-binding domain; sequence DVNECDSRPCLHGGTCQDSYGTYKCTCPQGYTGLNCQ. Serine 1027 carries an O-linked (Glc...) serine glycan. Threonine 1035 is a glycosylation site (O-linked (Fuc...) threonine). EGF-like domains follow at residues 1059–1095 and 1097–1143; these read LVRW…VNCD and LSVS…SYCE. Serine 1065 carries an O-linked (Glc...) serine glycan. The EGF-like 30; calcium-binding domain occupies 1145 to 1181; that stretch reads EVDECSPNPCQNGATCTDYLGGFSCKCVAGYHGSNCS. Threonine 1159 is a glycosylation site (O-linked (Fuc...) threonine). Asparagine 1179 carries N-linked (GlcNAc...) asparagine glycosylation. Positions 1183–1219 constitute an EGF-like 31; calcium-binding domain; the sequence is EINECLSQPCQNGGTCIDLTNSYKCSCPRGTQGVHCE. Serine 1189 carries O-linked (Glc...) serine glycosylation. A glycan (O-linked (Fuc...) threonine) is linked at threonine 1197. The 45-residue stretch at 1221 to 1265 folds into the EGF-like 32; calcium-binding domain; the sequence is NVDDCHPPLDPASRSPKCFNNGTCVDQVGGYTCTCPPGFVGERCE. Asparagine 1241 is a glycosylation site (N-linked (GlcNAc...) asparagine). 4 EGF-like domains span residues 1267 to 1305, 1307 to 1346, 1348 to 1384, and 1387 to 1426; these read DVNE…RRCE, VING…ATCE, DART…PECQ, and ASSP…LLCH. Serine 1273 carries O-linked (Glc...) serine glycosylation. O-linked (Fuc...) threonine glycosylation is present at threonine 1362. Residue threonine 1379 is glycosylated (O-linked (GlcNAc...) threonine). Threonine 1402 is a glycosylation site (O-linked (Fuc...) threonine; alternate). Threonine 1402 is a glycosylation site (O-linked (GalNAc...) threonine; alternate). 3 LNR repeats span residues 1449 to 1489, 1490 to 1531, and 1532 to 1571; these read CELP…PWKN, CTQS…CNPL, and YDQY…RLAA. The Ca(2+) site is built by aspartate 1457, asparagine 1460, aspartate 1475, and aspartate 1478. Asparagine 1489 carries an N-linked (GlcNAc...) asparagine glycan. 5 disulfides stabilise this stretch: cysteine 1490/cysteine 1514, cysteine 1496/cysteine 1509, cysteine 1505/cysteine 1521, cysteine 1536/cysteine 1549, and cysteine 1545/cysteine 1561. N-linked (GlcNAc...) asparagine glycosylation occurs at asparagine 1587. Residues 1718-1750 are interaction with PSEN1; it reads PPLPSQLHLMYVAAAAFVLLFFVGCGVLLSRKR. Residues 1726–1746 form a helical membrane-spanning segment; it reads LMYVAAAAFVLLFFVGCGVLL. Residues 1747–2531 lie on the Cytoplasmic side of the membrane; it reads SRKRRRQHGQ…QITHIPEAFK (785 aa). Lysine 1749 is covalently cross-linked (Glycyl lysine isopeptide (Lys-Gly) (interchain with G-Cter in ubiquitin)). Positions 1770–1798 are disordered; it reads KKKRREPLGEDSVGLKPLKNASDGALMDD. Threonine 1851 carries the phosphothreonine modification. ANK repeat units lie at residues 1917–1946, 1950–1980, 1984–2013, 2017–2046, and 2050–2079; these read TGET…DANI, MGRT…DLDA, DGTT…DVNA, LGKS…NKDM, and KEET…NRDI. Positions 1937–1945 are HIF1AN-binding; it reads LLEASADAN. A (3S)-3-hydroxyasparagine; by HIF1AN; partial modification is found at asparagine 1945. Positions 2004 to 2012 are HIF1AN-binding; sequence LINSHADVN. Asparagine 2012 is subject to (3S)-3-hydroxyasparagine; by HIF1AN; partial. Disordered stretches follow at residues 2140–2185, 2382–2428, and 2440–2531; these read KSAT…DSSS, QPQN…SLPV, and PTSL…EAFK. A compositionally biased stretch (low complexity) spans 2382-2395; that stretch reads QPQNLQPPSQPHLS. Polar residues predominate over residues 2440 to 2478; that stretch reads PTSLPSSMVPPMTTTQFLTPPSQHSYSSSPVDNTPSHQL. A compositionally biased stretch (low complexity) spans 2488 to 2503; it reads PSPESPDQWSSSSPHS. Residues 2504–2524 are compositionally biased toward polar residues; sequence NISDWSEGISSPPTTMPSQIT.

Belongs to the NOTCH family. In terms of assembly, heterodimer of a C-terminal fragment N(TM) and an N-terminal fragment N(EC) which are probably linked by disulfide bonds. Interacts with DNER, DTX1, DTX2 and RBPJ/RBPSUH. Also interacts with MAML1, MAML2 and MAML3 which act as transcriptional coactivators for NOTCH1. Notch 1 intracellular domain interacts with SNW1; the interaction involves multimerized NOTCH1 NICD and is implicated in a formation of an intermediate preactivation complex which associates with DNA-bound CBF-1/RBPJ. The activated membrane-bound form interacts with AAK1 which promotes NOTCH1 stabilization. Forms a trimeric complex with FBXW7 and SGK1. Interacts with HIF1AN. HIF1AN negatively regulates the function of notch intracellular domain (NICD), accelerating myogenic differentiation. Interacts (via NICD) with SNAI1 (via zinc fingers); the interaction induces SNAI1 degradation via MDM2-mediated ubiquitination and inhibits SNAI1-induced cell invasion. Interacts (via NICD) with MDM2A. Interacts (via NICD) with BCL6; the interaction decreases MAML1 recruitment by NOTCH1 NICD on target genes DNA and inhibits NOTCH1 transactivation activity. Interacts with THBS4. Interacts (via the EGF-like repeat region) with CCN3 (via CTCK domain). Interacts (via EGF-like domains) with DLL4 (via N-terminal DSL and MNNL domains). Interacts with ZMIZ1. Interacts (via NICD domain) with MEGF10 (via the cytoplasmic domain). Interacts with DLL1 and JAG1. Interacts (via NICD domain) with PRAG1. Forms a complex with PRAG1, N1ICD and MAML1, in a MAML1-dependent manner. Interacts (via transmembrane region) with PSEN1; the interaction is direct. Interacts with ZFP64. Synthesized in the endoplasmic reticulum as an inactive form which is proteolytically cleaved by a furin-like convertase in the trans-Golgi network before it reaches the plasma membrane to yield an active, ligand-accessible form. Cleavage results in a C-terminal fragment N(TM) and a N-terminal fragment N(EC). Following ligand binding, it is cleaved by ADAM17 to yield a membrane-associated intermediate fragment called notch extracellular truncation (NEXT). Following endocytosis, this fragment is then cleaved by one of the catalytic subunits of gamma-secretase (PSEN1 or PSEN2) to release a Notch-derived peptide containing the intracellular domain (NICD) from the membrane. Post-translationally, phosphorylated. In terms of processing, O-linked glycosylation by GALNT11 is involved in determination of left/right symmetry: glycosylation promotes activation of NOTCH1, possibly by promoting cleavage by ADAM17, modulating the balance between motile and immotile (sensory) cilia at the left-right organiser (LRO). O-glycosylated on the EGF-like domains. O-glucosylated at Ser-435 by KDELC1 and KDELC2. Contains both O-linked fucose and O-linked glucose in the EGF-like domains 11, 12 and 13, which are interacting with the residues on DLL4. O-glycosylation at Ser-1027 is only partial. MFNG-, RFNG- and LFNG-mediated modification of O-fucose residues at specific EGF-like domains results in inhibition of its activation by JAG1 and enhancement of its activation by DLL1 via an increased binding to DLL1. Ubiquitinated. Undergoes 'Lys-29'-linked polyubiquitination by ITCH; promotes the lysosomal degradation of non-activated internalized NOTCH1. Deubiquitination by USP12 is required for transport of internalized non-activated receptor from late endosomes to lysosomes for degradation. Monoubiquitination at Lys-1749 is required for activation by gamma-secretase cleavage, it promotes interaction with AAK1, which stabilizes it. Deubiquitination by EIF3F is necessary for nuclear import of activated Notch. Post-translationally, hydroxylated at Asn-1945 and Asn-2012 by HIF1AN. Hydroxylation reduces affinity for HI1AN and may thus indirectly modulate negative regulation of NICD. As to expression, highly expressed in the brain, lung and thymus. Expressed at lower levels in the spleen, bone-marrow, spinal cord, eyes, mammary gland, liver, intestine, skeletal muscle, kidney and heart. In the hair follicle, highly expressed exclusively in the epithelial compartment.

The protein resides in the cell membrane. The protein localises to the late endosome membrane. It is found in the nucleus. Functionally, functions as a receptor for membrane-bound ligands Jagged-1 (JAG1), Jagged-2 (JAG2) and Delta-1 (DLL1) to regulate cell-fate determination. Upon ligand activation through the released notch intracellular domain (NICD) it forms a transcriptional activator complex with RBPJ/RBPSUH and activates genes of the enhancer of split locus. Affects the implementation of differentiation, proliferation and apoptotic programs. Involved in angiogenesis; negatively regulates endothelial cell proliferation and migration and angiogenic sprouting. Involved in the maturation of both CD4(+) and CD8(+) cells in the thymus. Important for follicular differentiation and possibly cell fate selection within the follicle. During cerebellar development, functions as a receptor for neuronal DNER and is involved in the differentiation of Bergmann glia. Represses neuronal and myogenic differentiation. May play an essential role in postimplantation development, probably in some aspect of cell specification and/or differentiation. May be involved in mesoderm development, somite formation and neurogenesis. May enhance HIF1A function by sequestering HIF1AN away from HIF1A. Required for the THBS4 function in regulating protective astrogenesis from the subventricular zone (SVZ) niche after injury. Involved in determination of left/right symmetry by modulating the balance between motile and immotile (sensory) cilia at the left-right organiser (LRO). The polypeptide is Neurogenic locus notch homolog protein 1 (Notch1) (Mus musculus (Mouse)).